Here is a 396-residue protein sequence, read N- to C-terminus: Dimethyladenosine transferase 2, mitochondrial (396 aa).

The N-terminal 19 residues, 1-19, are a transit peptide targeting the mitochondrion; that stretch reads MWIPVVGLPRRLRLSALAG. The disordered stretch occupies residues 44-64; the sequence is LSDSSPQLWPEPDFRNPPRKA. Positions 75, 124, and 150 each coordinate S-adenosyl-L-methionine. Positions 330–331 are DNA-binding; sequence RR.

It belongs to the class I-like SAM-binding methyltransferase superfamily. rRNA adenine N(6)-methyltransferase family. KsgA subfamily. In terms of assembly, homodimer. Component of the mitochondrial transcription initiation complex, composed at least of TFB2M, TFAM and POLRMT. In this complex TFAM recruits POLRMT to the promoter whereas TFB2M induces structural changes in POLRMT to enable promoter opening and trapping of the DNA non-template strand. Interacts with mitochondrial RNA polymerase POLRMT. Interacts with TFAM. Ubiquitously expressed.

The protein resides in the mitochondrion. It carries out the reaction adenosine in rRNA + S-adenosyl-L-methionine = N(6)-methyladenosine in rRNA + S-adenosyl-L-homocysteine + H(+). Functionally, S-adenosyl-L-methionine-dependent rRNA methyltransferase which may methylate two specific adjacent adenosines in the loop of a conserved hairpin near the 3'-end of 12S mitochondrial rRNA. Component of the mitochondrial transcription initiation complex, composed at least of TFB2M, TFAM and POLRMT that is required for basal transcription of mitochondrial DNA. In this complex, TFAM recruits POLRMT to a specific promoter whereas TFB2M induces structural changes in POLRMT to enable promoter opening and trapping of the DNA non-template strand. Stimulates transcription independently of the methyltransferase activity. The chain is Dimethyladenosine transferase 2, mitochondrial from Homo sapiens (Human).